Here is a 211-residue protein sequence, read N- to C-terminus: MNVFTSSVGSVEFDHPLLLENDLTSLSINCDDVHCSSRALCYIYDIHSSRHPSIDEHQFLRLLHGPDDAVTLGSFLKTLIWILSHDKNLPEEYRLPTIMMSSSYVKFFTEVKPRPPSTNCWTCRMSKDNLPFTVPSVKGFPPDAELYIVPISDHDGKPVKFDNRKTLYRSPSKKRHKYVISSDKPPLSARYVKYVDSSALESLPGSSPAVL.

Belongs to the tenuiviruses p3 protein family. As to quaternary structure, homodimer.

It localises to the host cytoplasm. Its function is as follows. Acts as a suppressor of RNA-mediated gene silencing, also known as post-transcriptional gene silencing (PTGS), presumably through the binding of dsRNA. This chain is Suppressor of RNA silencing p3, found in Avena sativa (Oat).